The chain runs to 90 residues: Small ribosomal subunit protein bS16 (90 aa).

This sequence belongs to the bacterial ribosomal protein bS16 family.

The protein is Small ribosomal subunit protein bS16 of Streptococcus sanguinis (strain SK36).